Here is a 99-residue protein sequence, read N- to C-terminus: Small ribosomal subunit protein bS6c (99 aa).

It belongs to the bacterial ribosomal protein bS6 family.

It is found in the plastid. The protein resides in the chloroplast. In terms of biological role, binds together with bS18 to 16S ribosomal RNA. This Cyanidioschyzon merolae (strain NIES-3377 / 10D) (Unicellular red alga) protein is Small ribosomal subunit protein bS6c.